The sequence spans 242 residues: tRNA pseudouridine synthase A (242 aa).

D51 acts as the Nucleophile in catalysis. Residue Y107 coordinates substrate.

It belongs to the tRNA pseudouridine synthase TruA family. As to quaternary structure, homodimer.

The enzyme catalyses uridine(38/39/40) in tRNA = pseudouridine(38/39/40) in tRNA. Formation of pseudouridine at positions 38, 39 and 40 in the anticodon stem and loop of transfer RNAs. This chain is tRNA pseudouridine synthase A, found in Helicobacter pylori (strain P12).